A 238-amino-acid polypeptide reads, in one-letter code: Probable transcriptional regulatory protein SMU_1789c (238 aa).

The protein belongs to the TACO1 family. YeeN subfamily.

The protein localises to the cytoplasm. In Streptococcus mutans serotype c (strain ATCC 700610 / UA159), this protein is Probable transcriptional regulatory protein SMU_1789c.